The chain runs to 671 residues: DNA ligase (671 aa).

NAD(+)-binding positions include 32–36, 81–82, and glutamate 113; these read DAEYD and SL. Catalysis depends on lysine 115, which acts as the N6-AMP-lysine intermediate. 4 residues coordinate NAD(+): arginine 136, glutamate 173, lysine 290, and lysine 314. The Zn(2+) site is built by cysteine 408, cysteine 411, cysteine 426, and cysteine 432. A BRCT domain is found at 593-671; that stretch reads EIDSPFAGKT…EAEMIRLLGA (79 aa).

This sequence belongs to the NAD-dependent DNA ligase family. LigA subfamily. Mg(2+) is required as a cofactor. Requires Mn(2+) as cofactor.

It carries out the reaction NAD(+) + (deoxyribonucleotide)n-3'-hydroxyl + 5'-phospho-(deoxyribonucleotide)m = (deoxyribonucleotide)n+m + AMP + beta-nicotinamide D-nucleotide.. DNA ligase that catalyzes the formation of phosphodiester linkages between 5'-phosphoryl and 3'-hydroxyl groups in double-stranded DNA using NAD as a coenzyme and as the energy source for the reaction. It is essential for DNA replication and repair of damaged DNA. The polypeptide is DNA ligase (Salmonella dublin (strain CT_02021853)).